Consider the following 976-residue polypeptide: MKLKSVFRSVLKYRKTNLSLLLLITYSIITLLYIFDHERYKLNLPKEDEHPEFNDLLETAWGDLQIITASFHPYTSKENDKVHDYLLKRVLEITGNSSFASVSDDKESERSILFQQQDPFNESSRFSRVTYFESSNILVKLEGKNPEEEGLLLSAHFDSVPTGYGATDDGMGVVSLLANLKYHIKHRPNRTLIFNFNNNEEFGLLGASTYFDHSWSNLTKYVINLEGTGAGGKAVLFRTSDTSTARIYQQSVKENPFGNSIYQQGFYSRYVRSETDYKIYEENGMRGWDVAFYKPRNLYHTIKDSIQYTSKASLWHMLHTSLQLSAYVASNSLDTADQTPACYFDFIGLKFFVISAKTLFYWNCIFLLVSPVVAIGLYLISRDRMTWKSYSWLSWTRFPLSLAAGIIVQKLFSNDIIRSNPLTFSRNYFWPISAFFTQVIFTSYVLINCSNFFFPCADMKSLSIIELFIILWTILLFTSKLLYSSDYRYTGLYPLSIFFLLSTIAAILRLLALALGMRTRKRLGRECRDHHSNYSSHSQIDMERDGQENLEQPQDQLTSSQDDQASIQDDNVSTTSAGPSHNVDEDHGMDSSSQQHDERVPLLKGSNSMEEGLSTRENSLKLEYTDYAWIIQFLLIVPIPSFILFNSVDVIMDALNHTVQEGSKATFDVLRFGMVGSILIALPILPFFYKVNYITISLTALLFLISASKTLLVHPFTNSNPLKVRFSQNIDLSQGNAASVHVLGREGNFLKPMLQDLPSIKYSSTHINCTSVTNGMELCMYDGMQPNLLSTNGNTNISSMVKVHVLHNNRNSTERSPYEPIVAELLLEVKENRACTLTFESRHQAKSPVREITVYQKKNSAPQKANITKTIKSASGINELQLHKLDFDQETYHIGVQWFPKLLTDGNVEDDKLGTKDELSVSISCYWGEYDSESVVNGTAVRKIPAFDELINYAPLSFSFTNEQKGLVIVKDAIIL.

The Cytoplasmic portion of the chain corresponds to 1 to 15; sequence MKLKSVFRSVLKYRK. Residues 16 to 36 form a helical membrane-spanning segment; that stretch reads TNLSLLLLITYSIITLLYIFD. Over 37–359 the chain is Vacuolar; sequence HERYKLNLPK…KFFVISAKTL (323 aa). N-linked (GlcNAc...) asparagine glycans are attached at residues Asn96 and Asn121. Positions 156 and 168 each coordinate Zn(2+). Asn189 carries an N-linked (GlcNAc...) asparagine glycan. The active-site Proton acceptor is the Glu200. Position 201 (Glu201) interacts with Zn(2+). Asn217 carries an N-linked (GlcNAc...) asparagine glycan. Residues Glu226 and His300 each contribute to the Zn(2+) site. The helical transmembrane segment at 360 to 380 threads the bilayer; that stretch reads FYWNCIFLLVSPVVAIGLYLI. At 381–392 the chain is on the cytoplasmic side; the sequence is SRDRMTWKSYSW. A helical transmembrane segment spans residues 393-412; the sequence is LSWTRFPLSLAAGIIVQKLF. The Vacuolar segment spans residues 413-428; the sequence is SNDIIRSNPLTFSRNY. The helical transmembrane segment at 429 to 449 threads the bilayer; that stretch reads FWPISAFFTQVIFTSYVLINC. The Cytoplasmic segment spans residues 450–461; the sequence is SNFFFPCADMKS. Residues 462–482 form a helical membrane-spanning segment; the sequence is LSIIELFIILWTILLFTSKLL. The Vacuolar segment spans residues 483–496; that stretch reads YSSDYRYTGLYPLS. The chain crosses the membrane as a helical span at residues 497–517; it reads IFFLLSTIAAILRLLALALGM. The Cytoplasmic portion of the chain corresponds to 518–627; it reads RTRKRLGREC…NSLKLEYTDY (110 aa). Residues 528-610 form a disordered region; sequence RDHHSNYSSH…PLLKGSNSME (83 aa). The segment covering 549–558 has biased composition (polar residues); that stretch reads NLEQPQDQLT. Positions 559 to 570 are enriched in low complexity; sequence SSQDDQASIQDD. Residues 582-601 show a composition bias toward basic and acidic residues; the sequence is NVDEDHGMDSSSQQHDERVP. The chain crosses the membrane as a helical span at residues 628-648; that stretch reads AWIIQFLLIVPIPSFILFNSV. Topologically, residues 649–668 are vacuolar; sequence DVIMDALNHTVQEGSKATFD. The N-linked (GlcNAc...) asparagine glycan is linked to Asn656. Residues 669 to 689 form a helical membrane-spanning segment; it reads VLRFGMVGSILIALPILPFFY. At 690 to 692 the chain is on the cytoplasmic side; it reads KVN. A helical transmembrane segment spans residues 693 to 713; that stretch reads YITISLTALLFLISASKTLLV. The Vacuolar portion of the chain corresponds to 714 to 976; sequence HPFTNSNPLK…LVIVKDAIIL (263 aa). N-linked (GlcNAc...) asparagine glycans are attached at residues Asn768, Asn796, Asn811, Asn866, and Asn937.

It belongs to the peptidase M28 family. Zn(2+) is required as a cofactor. In terms of processing, N-glycosylated.

It is found in the vacuole membrane. May be involved in vacuolar sorting and osmoregulation. This Saccharomyces cerevisiae (strain ATCC 204508 / S288c) (Baker's yeast) protein is Vacuolar membrane protease.